Here is a 410-residue protein sequence, read N- to C-terminus: Bifunctional enzyme IspD/IspF (410 aa).

The segment at 1-257 (MSHDPVVPSA…AGAGSASSRL (257 aa)) is 2-C-methyl-D-erythritol 4-phosphate cytidylyltransferase. Positions 258–410 (RSGIGTDVHA…AVATALVERL (153 aa)) are 2-C-methyl-D-erythritol 2,4-cyclodiphosphate synthase. Residues Asp264 and His266 each coordinate a divalent metal cation. 4-CDP-2-C-methyl-D-erythritol 2-phosphate contacts are provided by residues 264 to 266 (DVH) and 290 to 291 (HS). His298 provides a ligand contact to a divalent metal cation. 4-CDP-2-C-methyl-D-erythritol 2-phosphate is bound by residues 312–314 (DIG), 385–388 (TTTD), Phe392, and Arg395.

This sequence in the N-terminal section; belongs to the IspD/TarI cytidylyltransferase family. IspD subfamily. It in the C-terminal section; belongs to the IspF family. The cofactor is a divalent metal cation.

It carries out the reaction 2-C-methyl-D-erythritol 4-phosphate + CTP + H(+) = 4-CDP-2-C-methyl-D-erythritol + diphosphate. The enzyme catalyses 4-CDP-2-C-methyl-D-erythritol 2-phosphate = 2-C-methyl-D-erythritol 2,4-cyclic diphosphate + CMP. The protein operates within isoprenoid biosynthesis; isopentenyl diphosphate biosynthesis via DXP pathway; isopentenyl diphosphate from 1-deoxy-D-xylulose 5-phosphate: step 2/6. Its pathway is isoprenoid biosynthesis; isopentenyl diphosphate biosynthesis via DXP pathway; isopentenyl diphosphate from 1-deoxy-D-xylulose 5-phosphate: step 4/6. Bifunctional enzyme that catalyzes the formation of 4-diphosphocytidyl-2-C-methyl-D-erythritol from CTP and 2-C-methyl-D-erythritol 4-phosphate (MEP) (IspD), and catalyzes the conversion of 4-diphosphocytidyl-2-C-methyl-D-erythritol 2-phosphate (CDP-ME2P) to 2-C-methyl-D-erythritol 2,4-cyclodiphosphate (ME-CPP) with a corresponding release of cytidine 5-monophosphate (CMP) (IspF). The sequence is that of Bifunctional enzyme IspD/IspF from Clavibacter michiganensis subsp. michiganensis (strain NCPPB 382).